Here is a 319-residue protein sequence, read N- to C-terminus: ATP-dependent 6-phosphofructokinase (319 aa).

Gly-11 contacts ATP. 21–25 is a binding site for ADP; sequence RAVVR. Residues 72–73 and 102–105 each bind ATP; these read RS and GDGS. Asp-103 is a Mg(2+) binding site. 125–127 serves as a coordination point for substrate; the sequence is TID. The Proton acceptor role is filled by Asp-127. Arg-154 is an ADP binding site. Residues Arg-162 and 169–171 contribute to the substrate site; that span reads MGR. Residues 185–187, Arg-211, and 213–215 each bind ADP; these read GAE and KKH. Residues Glu-222, Arg-243, and 249–252 contribute to the substrate site; that span reads HIQR.

This sequence belongs to the phosphofructokinase type A (PFKA) family. ATP-dependent PFK group I subfamily. Prokaryotic clade 'B1' sub-subfamily. Homotetramer. It depends on Mg(2+) as a cofactor.

The protein resides in the cytoplasm. It catalyses the reaction beta-D-fructose 6-phosphate + ATP = beta-D-fructose 1,6-bisphosphate + ADP + H(+). It participates in carbohydrate degradation; glycolysis; D-glyceraldehyde 3-phosphate and glycerone phosphate from D-glucose: step 3/4. Allosterically activated by ADP and other diphosphonucleosides, and allosterically inhibited by phosphoenolpyruvate. In terms of biological role, catalyzes the phosphorylation of D-fructose 6-phosphate to fructose 1,6-bisphosphate by ATP, the first committing step of glycolysis. This is ATP-dependent 6-phosphofructokinase from Oceanobacillus iheyensis (strain DSM 14371 / CIP 107618 / JCM 11309 / KCTC 3954 / HTE831).